The sequence spans 542 residues: Propane 2-monooxygenase, hydroxylase component large subunit (542 aa).

Fe cation-binding residues include Glu-97, Glu-127, His-130, Glu-192, Glu-226, and His-229.

Belongs to the TmoA/XamoA family. As to quaternary structure, the propane 2-monooxygenase multicomponent enzyme system is composed of an electron transfer component and a monooxygenase component interacting with the effector protein MimD. The electron transfer component is composed of a reductase (MimB), and the monooxygenase component is formed by a large subunit (MimA) and a small subunit (MimC). Requires the presence of the chaperonin-like protein MimG to ensure a productive folding, resulting of a soluble MimA, which leads to the active form of MimABCD. Requires Fe(2+) as cofactor.

It catalyses the reaction propane + NADH + O2 + H(+) = propan-2-ol + NAD(+) + H2O. The catalysed reaction is acetone + NADH + O2 + H(+) = hydroxyacetone + NAD(+) + H2O. The enzyme catalyses butan-2-one + NADH + O2 + H(+) = 1-hydroxy-2-butanone + NAD(+) + H2O. It carries out the reaction phenol + NADH + O2 + H(+) = hydroquinone + NAD(+) + H2O. Its function is as follows. Component of the propane 2-monooxygenase multicomponent enzyme system which is involved in the degradation of propane via the O2-dependent hydroxylation of propane. Also involved in the degradation of acetone via the O2-dependent hydroxylation of acetone. Also able to catalyze the oxidation of phenol, methylethylketone (2-butanone), 1-propanol and 2-propanol. The polypeptide is Propane 2-monooxygenase, hydroxylase component large subunit (Mycolicibacterium smegmatis (strain ATCC 700084 / mc(2)155) (Mycobacterium smegmatis)).